A 339-amino-acid chain; its full sequence is Probable protein phosphatase 2C 28 (339 aa).

Positions 87–334 (DHGYHLVKGQ…DDISCVVVSF (248 aa)) constitute a PPM-type phosphatase domain. Residues aspartate 124, glycine 125, aspartate 286, and aspartate 325 each coordinate Mn(2+).

This sequence belongs to the PP2C family. Requires Mg(2+) as cofactor. Mn(2+) is required as a cofactor.

It catalyses the reaction O-phospho-L-seryl-[protein] + H2O = L-seryl-[protein] + phosphate. The enzyme catalyses O-phospho-L-threonyl-[protein] + H2O = L-threonyl-[protein] + phosphate. This Arabidopsis thaliana (Mouse-ear cress) protein is Probable protein phosphatase 2C 28.